The primary structure comprises 149 residues: Cell division protein SepF (149 aa).

Positions 12–57 (SNEEDDYYEEDGYEQSQQQEQQTTQQTSSQPRFVRQTTQSQTPAGL) are disordered. Residues 13–24 (NEEDDYYEEDGY) show a composition bias toward acidic residues. Residues 25–41 (EQSQQQEQQTTQQTSSQ) show a composition bias toward low complexity. Residues 46–57 (RQTTQSQTPAGL) show a composition bias toward polar residues.

This sequence belongs to the SepF family. Homodimer. Interacts with FtsZ.

Its subcellular location is the cytoplasm. In terms of biological role, cell division protein that is part of the divisome complex and is recruited early to the Z-ring. Probably stimulates Z-ring formation, perhaps through the cross-linking of FtsZ protofilaments. Its function overlaps with FtsA. The polypeptide is Cell division protein SepF (Leuconostoc mesenteroides subsp. mesenteroides (strain ATCC 8293 / DSM 20343 / BCRC 11652 / CCM 1803 / JCM 6124 / NCDO 523 / NBRC 100496 / NCIMB 8023 / NCTC 12954 / NRRL B-1118 / 37Y)).